The sequence spans 135 residues: Prostate and breast cancer overexpressed gene 1 protein (135 aa).

Expressed in colon, prostate, small intestine, testis and spleen, with lower expression in thymus, ovary, and peripheral blood leukocytes. Up-regulated expression in prostate, breast, and bladder cancer, but not in lung and colon cancer.

The protein resides in the cytoplasm. Its subcellular location is the nucleus. The polypeptide is Prostate and breast cancer overexpressed gene 1 protein (PBOV1) (Homo sapiens (Human)).